The primary structure comprises 400 residues: Large envelope protein (400 aa).

An N-acetylmethionine modification is found at M1. 3 disordered regions span residues 1–53, 88–118, and 145–169; these read MGGW…DHWP, VPVAPPPASTNRQSGRQPTPISPPLRDSHPQ, and GSSSGTVNPVPTTASPISSISSRTG. G2 is lipidated: N-myristoyl glycine; by host. Positions 2-119 are pre-S1; sequence GGWSSKPRQG…PPLRDSHPQA (118 aa). The tract at residues 2-174 is pre-S; sequence GGWSSKPRQG…SSRTGDPAPN (173 aa). The Virion surface; in external conformation portion of the chain corresponds to 2-181; that stretch reads GGWSSKPRQG…APNMENTTSG (180 aa). At 2–253 the chain is on the intravirion; in internal conformation side; sequence GGWSSKPRQG…PGYRWMCLRR (252 aa). W4 carries N-linked (GlcNAc...) asparagine glycosylation. A compositionally biased stretch (polar residues) spans 96–106; sequence STNRQSGRQPT. Residues 120–174 are pre-S2; it reads MQWNSTTFHQALLDPRVRGLYFPAGGSSSGTVNPVPTTASPISSISSRTGDPAPN. Positions 155-166 are enriched in low complexity; that stretch reads PTTASPISSISS. Residues 182 to 202 traverse the membrane as a helical segment; it reads FLGPLLVLQAGFFLLTRILTI. The Intravirion; in external conformation segment spans residues 203–253; the sequence is PQSLDSWWTSLNFLGGAPTCPGQNSQSPTSNHSPTSCPPICPGYRWMCLRR. The helical transmembrane segment at 254-274 threads the bilayer; sequence FIIFLFILLLCLIFLLVLLDY. Residues 275–348 are Virion surface-facing; the sequence is QGMLPVCPLL…GASVRFSWLS (74 aa). An N-linked (GlcNAc...) asparagine; by host glycan is attached at N320. A helical membrane pass occupies residues 349 to 369; the sequence is LLVPFVQWFVGLSPTVWLSVI. Topologically, residues 370–375 are intravirion; that stretch reads WMMWYW. The chain crosses the membrane as a helical span at residues 376-398; it reads GPSLYNILSPFLPLLPIFFCLWV. At 399–400 the chain is on the virion surface side; it reads YI.

It belongs to the orthohepadnavirus major surface antigen family. In terms of assembly, in its internal form (Li-HBsAg), interacts with the capsid protein and with the isoform S. Interacts with host chaperone CANX. Associates with host chaperone CANX through its pre-S2 N glycan; this association may be essential for isoform M proper secretion. As to quaternary structure, interacts with isoform L. Interacts with the antigens of satellite virus HDV (HDVAgs); this interaction is required for encapsidation of HDV genomic RNA. Isoform M is N-terminally acetylated by host at a ratio of 90%, and N-glycosylated by host at the pre-S2 region. In terms of processing, myristoylated.

It localises to the virion membrane. Its function is as follows. The large envelope protein exists in two topological conformations, one which is termed 'external' or Le-HBsAg and the other 'internal' or Li-HBsAg. In its external conformation the protein attaches the virus to cell receptors and thereby initiating infection. This interaction determines the species specificity and liver tropism. This attachment induces virion internalization predominantly through caveolin-mediated endocytosis. The large envelope protein also assures fusion between virion membrane and endosomal membrane. In its internal conformation the protein plays a role in virion morphogenesis and mediates the contact with the nucleocapsid like a matrix protein. Functionally, the middle envelope protein plays an important role in the budding of the virion. It is involved in the induction of budding in a nucleocapsid independent way. In this process the majority of envelope proteins bud to form subviral lipoprotein particles of 22 nm of diameter that do not contain a nucleocapsid. This chain is Large envelope protein, found in Hepatitis B virus genotype C subtype adr (strain Japan/adr4/1983) (HBV-C).